Here is a 78-residue protein sequence, read N- to C-terminus: UPF0349 protein ABC2936 (78 aa).

The protein belongs to the UPF0349 family.

In Shouchella clausii (strain KSM-K16) (Alkalihalobacillus clausii), this protein is UPF0349 protein ABC2936.